The chain runs to 176 residues: Ribosome maturation factor RimM (176 aa).

The PRC barrel domain occupies 95–169 (EDEVYLFELE…TARIAPPPGL (75 aa)).

It belongs to the RimM family. In terms of assembly, binds ribosomal protein uS19.

The protein localises to the cytoplasm. An accessory protein needed during the final step in the assembly of 30S ribosomal subunit, possibly for assembly of the head region. Essential for efficient processing of 16S rRNA. May be needed both before and after RbfA during the maturation of 16S rRNA. It has affinity for free ribosomal 30S subunits but not for 70S ribosomes. The protein is Ribosome maturation factor RimM of Nitratidesulfovibrio vulgaris (strain ATCC 29579 / DSM 644 / CCUG 34227 / NCIMB 8303 / VKM B-1760 / Hildenborough) (Desulfovibrio vulgaris).